The primary structure comprises 180 residues: Acireductone dioxygenase (180 aa).

Fe(2+) is bound by residues H97, H99, E103, and H141. Residues H97, H99, E103, and H141 each coordinate Ni(2+).

It belongs to the acireductone dioxygenase (ARD) family. As to quaternary structure, monomer. The cofactor is Fe(2+). Ni(2+) is required as a cofactor.

The catalysed reaction is 1,2-dihydroxy-5-(methylsulfanyl)pent-1-en-3-one + O2 = 3-(methylsulfanyl)propanoate + CO + formate + 2 H(+). The enzyme catalyses 1,2-dihydroxy-5-(methylsulfanyl)pent-1-en-3-one + O2 = 4-methylsulfanyl-2-oxobutanoate + formate + 2 H(+). The protein operates within amino-acid biosynthesis; L-methionine biosynthesis via salvage pathway; L-methionine from S-methyl-5-thio-alpha-D-ribose 1-phosphate: step 5/6. In terms of biological role, catalyzes 2 different reactions between oxygen and the acireductone 1,2-dihydroxy-3-keto-5-methylthiopentene (DHK-MTPene) depending upon the metal bound in the active site. Fe-containing acireductone dioxygenase (Fe-ARD) produces formate and 2-keto-4-methylthiobutyrate (KMTB), the alpha-ketoacid precursor of methionine in the methionine recycle pathway. Ni-containing acireductone dioxygenase (Ni-ARD) produces methylthiopropionate, carbon monoxide and formate, and does not lie on the methionine recycle pathway. This is Acireductone dioxygenase from Enterobacter sp. (strain 638).